We begin with the raw amino-acid sequence, 1231 residues long: Cohesin subunit SA-2 (1231 aa).

Position 1 is an N-acetylmethionine (methionine 1). Residues 1 to 75 are disordered; it reads MIAAPEIPTD…GPNRMNGHHQ (75 aa). A compositionally biased stretch (basic residues) spans 36 to 48; that stretch reads KQGKGKTCKKGKK. Residues 293–378 form the SCD domain; it reads FVHRYRDAIA…SRFKDRIVSM (86 aa). Lysine 607 bears the N6-acetyllysine mark. Phosphoserine occurs at positions 1058, 1061, 1064, and 1065. Residues 1064–1083 form a disordered region; sequence SSRGSTVRSKKSKPSTGKRK. Basic residues predominate over residues 1071-1082; it reads RSKKSKPSTGKR. The residue at position 1112 (threonine 1112) is a Phosphothreonine. Serine 1177 and serine 1178 each carry phosphoserine.

Belongs to the SCC3 family. In terms of assembly, interacts directly with RAD21 in cohesin complex. Cohesin complexes are composed of a heterodimer between a SMC1 protein (SMC1A or SMC1B) and SMC3, which are attached via their hinge domain, and RAD21 which link them at their heads, and one STAG protein (STAG1, STAG2 or STAG3). In cohesin complexes, STAG2 is mutually exclusive with STAG1 and STAG3. In terms of processing, phosphorylated by PLK1. The large dissociation of cohesin from chromosome arms during prophase is partly due to its phosphorylation.

It is found in the nucleus. Its subcellular location is the chromosome. The protein localises to the centromere. Functionally, component of cohesin complex, a complex required for the cohesion of sister chromatids after DNA replication. The cohesin complex apparently forms a large proteinaceous ring within which sister chromatids can be trapped. At anaphase, the complex is cleaved and dissociates from chromatin, allowing sister chromatids to segregate. The cohesin complex may also play a role in spindle pole assembly during mitosis. In Homo sapiens (Human), this protein is Cohesin subunit SA-2 (STAG2).